A 1251-amino-acid chain; its full sequence is MSTERDSETTFDEDSQPNDEVVPYSDDETEDELDDQGSAVEPEQNRVNREAEENREPFRKECTWQVKANDRKYHEQPHFMNTKFLCIKESKYANNAIKTYKYNAFTFIPMNLFEQFKRAANLYFLALLILQAVPQISTLAWYTTLVPLLVVLGVTAIKDLVDDVARHKMDKEINNRTCEVIKDGRFKVAKWKEIQVGDVIRLKKNDFVPADILLLSSSEPNSLCYVETAELDGETNLKFKMSLEITDQYLQREDTLATFDGFIECEEPNNRLDKFTGTLFWRNTSFPLDADKILLRGCVIRNTDFCHGLVIFAGADTKIMKNSGKTRFKRTKIDYLMNYMVYTIFVVLILLSAGLAIGHAYWEAQVGNSSWYLYDGEDDTPSYRGFLIFWGYIIVLNTMVPISLYVSVEVIRLGQSHFINWDLQMYYAEKDTPAKARTTTLNEQLGQIHYIFSDKTGTLTQNIMTFKKCCINGQIYGDHRDASQHNHNKIEQVDFSWNTYADGKLAFYDHYLIEQIQSGKEPEVRQFFFLLAVCHTVMVDRTDGQLNYQAASPDEGALVNAARNFGFAFLARTQNTITISELGTERTYNVLAILDFNSDRKRMSIIVRTPEGNIKLYCKGADTVIYERLHRMNPTKQETQDALDIFANETLRTLCLCYKEIEEKEFTEWNKKFMAASVASTNRDEALDKVYEEIEKDLILLGATAIEDKLQDGVPETISKLAKADIKIWVLTGDKKETAENIGFACELLTEDTTICYGEDINSLLHARMENQRNRGGVYAKFAPPVQESFFPPGGNRALIITGSWLNEILLEKKTKRNKILKLKFPRTEEERRMRTQSKRRLEAKKEQRQKNFVDLACECSAVICCRVTPKQKAMVVDLVKRYKKAITLAIGDGANDVNMIKTAHIGVGISGQEGMQAVMSSDYSFAQFRYLQRLLLVHGRWSYIRMCKFLRYFFYKNFAFTLVHFWYSFFNGYSAQTAYEDWFITLYNVLYTSLPVLLMGLLDQDVSDKLSLRFPGLYIVGQRDLLFNYKRFFVSLLHGVLTSMILFFIPLGAYLQTVGQDGEAPSDYQSFAVTIASALVITVNFQIGLDTSYWTFVNAFSIFGSIALYFGIMFDFHSAGIHVLFPSAFQFTGTASNALRQPYIWLTIILAVAVCLLPVVAIRFLSMTIWPSESDKIQKHRKRLKAEEQWQRRQQVFRRGVSTRRSAYAFSHQRGYADLISSGRSIRKKRSPLDAIVADGTAEYRRTGDS.

The interval Met-1 to Asn-54 is disordered. At Met-1 to Ile-108 the chain is on the cytoplasmic side. The segment covering Ser-25–Asp-35 has biased composition (acidic residues). Basic and acidic residues predominate over residues Glu-43–Asn-54. Residues Pro-109–Leu-130 traverse the membrane as a helical segment. The Exoplasmic loop segment spans residues Gln-131–Ile-136. A helical membrane pass occupies residues Ser-137–Ala-156. The Cytoplasmic segment spans residues Ile-157–Met-340. Residues Val-341–Trp-362 form a helical membrane-spanning segment. Topologically, residues Glu-363–Phe-389 are exoplasmic loop. The chain crosses the membrane as a helical span at residues Trp-390–Ile-411. Residues Arg-412–Lys-949 lie on the Cytoplasmic side of the membrane. Asp-454 acts as the 4-aspartylphosphate intermediate in catalysis. ATP contacts are provided by Asp-454, Lys-455, Thr-456, Glu-555, Phe-596, Lys-619, Arg-652, Thr-732, Gly-733, Asp-734, Arg-867, and Lys-873. Asp-454 contributes to the Mg(2+) binding site. Thr-456 contributes to the Mg(2+) binding site. Asp-893 contacts Mg(2+). Residues Asn-896 and Asp-897 each coordinate ATP. Residue Asp-897 coordinates Mg(2+). A helical membrane pass occupies residues Phe-950–Phe-970. The Exoplasmic loop segment spans residues Phe-971–Asp-982. A helical transmembrane segment spans residues Trp-983 to Leu-1002. At Leu-1003–Arg-1032 the chain is on the cytoplasmic side. The chain crosses the membrane as a helical span at residues Phe-1033–Ala-1054. Topologically, residues Tyr-1055–Asp-1068 are exoplasmic loop. Residues Tyr-1069–Asp-1091 form a helical membrane-spanning segment. Topologically, residues Thr-1092–Phe-1097 are cytoplasmic. The chain crosses the membrane as a helical span at residues Val-1098–His-1118. Topologically, residues Ser-1119–Asn-1138 are exoplasmic loop. A helical membrane pass occupies residues Ala-1139 to Ile-1163. Over Arg-1164–Ser-1251 the chain is Cytoplasmic. Ser-1223 carries the post-translational modification Phosphoserine.

This sequence belongs to the cation transport ATPase (P-type) (TC 3.A.3) family. Type IV subfamily. In terms of assembly, component of a P4-ATPase flippase complex which consists of a catalytic alpha subunit ATP8B1 and an accessory beta subunit TMEM30A. The flippase ATP8B1:TMEM30A complex can form an intermediate phosphoenzyme in vitro. Also interacts with beta subunit TMEM30B. Requires Mg(2+) as cofactor. As to expression, found in most tissues except brain and skeletal muscle. Most abundant in pancreas and small intestine.

Its subcellular location is the cell membrane. It localises to the apical cell membrane. The protein resides in the cell projection. It is found in the stereocilium. The protein localises to the endoplasmic reticulum. Its subcellular location is the golgi apparatus. It carries out the reaction ATP + H2O + phospholipidSide 1 = ADP + phosphate + phospholipidSide 2.. The catalysed reaction is a 1,2-diacyl-sn-glycero-3-phosphocholine(out) + ATP + H2O = a 1,2-diacyl-sn-glycero-3-phosphocholine(in) + ADP + phosphate + H(+). It catalyses the reaction a 1,2-diacyl-sn-glycero-3-phospho-L-serine(out) + ATP + H2O = a 1,2-diacyl-sn-glycero-3-phospho-L-serine(in) + ADP + phosphate + H(+). In terms of biological role, catalytic component of a P4-ATPase flippase complex which catalyzes the hydrolysis of ATP coupled to the transport of phospholipids, in particular phosphatidylcholines (PC), from the outer to the inner leaflet of the plasma membrane. May participate in the establishment of the canalicular membrane integrity by ensuring asymmetric distribution of phospholipids in the canicular membrane. Thus may have a role in the regulation of bile acids transport into the canaliculus, uptake of bile acids from intestinal contents into intestinal mucosa or both and protect hepatocytes from bile salts. Involved in the microvillus formation in polarized epithelial cells; the function seems to be independent from its flippase activity. Participates in correct apical membrane localization of CDC42, CFTR and SLC10A2. Enables CDC42 clustering at the apical membrane during enterocyte polarization through the interaction between CDC42 polybasic region and negatively charged membrane lipids provided by ATP8B1. Together with TMEM30A is involved in uptake of the synthetic drug alkylphospholipid perifosine. Required for the preservation of cochlear hair cells in the inner ear. May act as cardiolipin transporter during inflammatory injury. In Homo sapiens (Human), this protein is Phospholipid-transporting ATPase IC.